Consider the following 250-residue polypeptide: Probable transcriptional regulatory protein DIP1378 (250 aa).

The tract at residues 1-22 is disordered; the sequence is MSGHSKWATTKHKKAANDAKRG.

It belongs to the TACO1 family.

It localises to the cytoplasm. The sequence is that of Probable transcriptional regulatory protein DIP1378 from Corynebacterium diphtheriae (strain ATCC 700971 / NCTC 13129 / Biotype gravis).